The sequence spans 269 residues: ParA family protein MG470 (269 aa).

It belongs to the ParA family.

The sequence is that of ParA family protein MG470 from Mycoplasma genitalium (strain ATCC 33530 / DSM 19775 / NCTC 10195 / G37) (Mycoplasmoides genitalium).